The primary structure comprises 375 residues: Arsenite methyltransferase (375 aa).

Position 335 is a phosphoserine (Ser-335).

The protein belongs to the methyltransferase superfamily. Arsenite methyltransferase family.

The protein resides in the cytoplasm. It localises to the cytosol. It carries out the reaction arsenic triglutathione + [thioredoxin]-dithiol + S-adenosyl-L-methionine + 2 H2O = methylarsonous acid + [thioredoxin]-disulfide + 3 glutathione + S-adenosyl-L-homocysteine + H(+). It catalyses the reaction arsenic triglutathione + 2 [thioredoxin]-dithiol + 2 S-adenosyl-L-methionine + H2O = dimethylarsinous acid + 2 [thioredoxin]-disulfide + 3 glutathione + 2 S-adenosyl-L-homocysteine + 2 H(+). The enzyme catalyses arsenic triglutathione + 3 [thioredoxin]-dithiol + 3 S-adenosyl-L-methionine = trimethylarsine + 3 [thioredoxin]-disulfide + 3 glutathione + 3 S-adenosyl-L-homocysteine + 3 H(+). In terms of biological role, catalyzes the transfer of a methyl group from AdoMet to trivalent arsenicals producing methylated and dimethylated arsenicals. It methylates arsenite to form methylarsonate, Me-AsO(3)H(2), which is reduced by methylarsonate reductase to methylarsonite, Me-As(OH)2. Methylarsonite is also a substrate and it is converted into the much less toxic compound dimethylarsinate (cacodylate), Me(2)As(O)-OH. This Homo sapiens (Human) protein is Arsenite methyltransferase (AS3MT).